A 581-amino-acid polypeptide reads, in one-letter code: CUE domain-containing protein 3 (581 aa).

The CUE domain occupies 271–314 (INPGDVKSLIELFPQLSVEEAVEHLSASLGNIDAACESVITSSL). Tyrosine 386 is modified (phosphotyrosine). Disordered regions lie at residues 422 to 448 (DDTYDDLDTTGPVDSGVGDDDPEASSK) and 522 to 581 (GSGN…SNEK). A compositionally biased stretch (polar residues) spans 522 to 542 (GSGNTNIGSLRQTKFKQSNYT). The segment covering 552–581 (QHRPSRPSKNPSLKKKKYVRTKPKKASNEK) has biased composition (basic residues).

As to quaternary structure, component of the RQT (ribosome quality control trigger) complex.

It localises to the cytoplasm. The protein resides in the nucleus. Functionally, involved in activation of the ribosome quality control (RQC) pathway, a pathway that degrades nascent peptide chains during problematic translation. Specifically recognizes and binds RPS20/uS10 ubiquitinated by HEL2, promoting recruitment of the RQT (ribosome quality control trigger) complex on stalled ribosomes, followed by disassembly of stalled ribosomes. The polypeptide is CUE domain-containing protein 3 (Schizosaccharomyces pombe (strain 972 / ATCC 24843) (Fission yeast)).